A 593-amino-acid polypeptide reads, in one-letter code: Isocitrate dehydrogenase kinase/phosphatase (593 aa).

Residues 324–330 (APGIRGL) and Lys-345 contribute to the ATP site. Residue Asp-380 is part of the active site.

The protein belongs to the AceK family.

The protein localises to the cytoplasm. It carries out the reaction L-seryl-[isocitrate dehydrogenase] + ATP = O-phospho-L-seryl-[isocitrate dehydrogenase] + ADP + H(+). Its function is as follows. Bifunctional enzyme which can phosphorylate or dephosphorylate isocitrate dehydrogenase (IDH) on a specific serine residue. This is a regulatory mechanism which enables bacteria to bypass the Krebs cycle via the glyoxylate shunt in response to the source of carbon. When bacteria are grown on glucose, IDH is fully active and unphosphorylated, but when grown on acetate or ethanol, the activity of IDH declines drastically concomitant with its phosphorylation. The chain is Isocitrate dehydrogenase kinase/phosphatase from Dechloromonas aromatica (strain RCB).